The primary structure comprises 892 residues: UPF0182 protein MCA2716 (892 aa).

7 helical membrane-spanning segments follow: residues 7–27 (LLTS…AIVL), 57–77 (ILSG…FWAA), 107–127 (GALP…ALPF), 163–183 (ILVL…VMVA), 206–226 (IHLN…YVLQ), 252–272 (LPLI…ALWF), and 281–301 (LALT…IDVV).

Belongs to the UPF0182 family.

The protein localises to the cell membrane. The polypeptide is UPF0182 protein MCA2716 (Methylococcus capsulatus (strain ATCC 33009 / NCIMB 11132 / Bath)).